Reading from the N-terminus, the 80-residue chain is Translational regulator CsrA (80 aa).

It belongs to the CsrA/RsmA family. As to quaternary structure, homodimer; the beta-strands of each monomer intercalate to form a hydrophobic core, while the alpha-helices form wings that extend away from the core.

Its subcellular location is the cytoplasm. Its function is as follows. A translational regulator that binds mRNA to regulate translation initiation and/or mRNA stability. Usually binds in the 5'-UTR at or near the Shine-Dalgarno sequence preventing ribosome-binding, thus repressing translation. Its main target seems to be the major flagellin gene, while its function is anatagonized by FliW. The sequence is that of Translational regulator CsrA from Desulforamulus reducens (strain ATCC BAA-1160 / DSM 100696 / MI-1) (Desulfotomaculum reducens).